The chain runs to 177 residues: Large ribosomal subunit protein uL6 (177 aa).

The protein belongs to the universal ribosomal protein uL6 family. As to quaternary structure, part of the 50S ribosomal subunit.

This protein binds to the 23S rRNA, and is important in its secondary structure. It is located near the subunit interface in the base of the L7/L12 stalk, and near the tRNA binding site of the peptidyltransferase center. The sequence is that of Large ribosomal subunit protein uL6 from Glaesserella parasuis serovar 5 (strain SH0165) (Haemophilus parasuis).